A 329-amino-acid polypeptide reads, in one-letter code: 4-hydroxythreonine-4-phosphate dehydrogenase (329 aa).

Substrate contacts are provided by H136 and T137. 3 residues coordinate a divalent metal cation: H166, H211, and H266. Residues K274, N283, and R292 each coordinate substrate.

The protein belongs to the PdxA family. In terms of assembly, homodimer. Zn(2+) serves as cofactor. The cofactor is Mg(2+). It depends on Co(2+) as a cofactor.

Its subcellular location is the cytoplasm. The enzyme catalyses 4-(phosphooxy)-L-threonine + NAD(+) = 3-amino-2-oxopropyl phosphate + CO2 + NADH. Its pathway is cofactor biosynthesis; pyridoxine 5'-phosphate biosynthesis; pyridoxine 5'-phosphate from D-erythrose 4-phosphate: step 4/5. Its function is as follows. Catalyzes the NAD(P)-dependent oxidation of 4-(phosphooxy)-L-threonine (HTP) into 2-amino-3-oxo-4-(phosphooxy)butyric acid which spontaneously decarboxylates to form 3-amino-2-oxopropyl phosphate (AHAP). The protein is 4-hydroxythreonine-4-phosphate dehydrogenase of Citrobacter koseri (strain ATCC BAA-895 / CDC 4225-83 / SGSC4696).